The following is a 328-amino-acid chain: Phenylalanine--tRNA ligase alpha subunit (328 aa).

Glu-253 is a binding site for Mg(2+).

Belongs to the class-II aminoacyl-tRNA synthetase family. Phe-tRNA synthetase alpha subunit type 1 subfamily. In terms of assembly, tetramer of two alpha and two beta subunits. Mg(2+) serves as cofactor.

The protein localises to the cytoplasm. The enzyme catalyses tRNA(Phe) + L-phenylalanine + ATP = L-phenylalanyl-tRNA(Phe) + AMP + diphosphate + H(+). This chain is Phenylalanine--tRNA ligase alpha subunit, found in Actinobacillus pleuropneumoniae serotype 5b (strain L20).